A 507-amino-acid chain; its full sequence is WD repeat-containing protein fzy-1 (507 aa).

2 disordered regions span residues 1–39 (MNNKGRTPGSAGRTVRSSAQQNGLTMRKRDMTPTRNTNL) and 74–95 (NKENLNNSMSEPNSPEKKSVEG). Polar residues-rich tracts occupy residues 15–24 (VRSSAQQNGL) and 74–86 (NKENLNNSMSEPN). WD repeat units lie at residues 219–258 (TNEGLITSVRWSQEGRYISLGYASGAVKIYDPNRPKTTEY), 313–352 (GHCRDVTALEWSADENMCVSGSSDRTAKIWDGRHVRGSTV), 364–406 (EHTG…QKVR), and 411–450 (CETGGVGGIVFNRPYSEMLTASDDGFLRIYRFNANYKLSH).

The protein belongs to the WD repeat CDC20/Fizzy family.

The protein localises to the chromosome. Its subcellular location is the cytoplasm. Its function is as follows. Plays a role in metaphase-anaphase transition during meiosis I. Required for embryonic anterior-posterior axis formation. The sequence is that of WD repeat-containing protein fzy-1 from Caenorhabditis elegans.